Here is a 209-residue protein sequence, read N- to C-terminus: Ribosomal RNA large subunit methyltransferase E (209 aa).

S-adenosyl-L-methionine contacts are provided by Gly-63, Trp-65, Asp-83, Asp-99, and Asp-124. The Proton acceptor role is filled by Lys-164.

The protein belongs to the class I-like SAM-binding methyltransferase superfamily. RNA methyltransferase RlmE family.

It is found in the cytoplasm. It carries out the reaction uridine(2552) in 23S rRNA + S-adenosyl-L-methionine = 2'-O-methyluridine(2552) in 23S rRNA + S-adenosyl-L-homocysteine + H(+). In terms of biological role, specifically methylates the uridine in position 2552 of 23S rRNA at the 2'-O position of the ribose in the fully assembled 50S ribosomal subunit. This Photorhabdus laumondii subsp. laumondii (strain DSM 15139 / CIP 105565 / TT01) (Photorhabdus luminescens subsp. laumondii) protein is Ribosomal RNA large subunit methyltransferase E.